The primary structure comprises 167 residues: NADH-ubiquinone oxidoreductase chain 6 (167 aa).

Helical transmembrane passes span 1-21, 27-47, 50-70, 88-108, and 143-163; these read MKMM…VAFA, VYGG…VVSL, VFLG…VFGY, VALS…LMSG, and WALV…LEVV.

This sequence belongs to the complex I subunit 6 family. In terms of assembly, core subunit of respiratory chain NADH dehydrogenase (Complex I) which is composed of 45 different subunits.

It localises to the mitochondrion inner membrane. It carries out the reaction a ubiquinone + NADH + 5 H(+)(in) = a ubiquinol + NAD(+) + 4 H(+)(out). In terms of biological role, core subunit of the mitochondrial membrane respiratory chain NADH dehydrogenase (Complex I) which catalyzes electron transfer from NADH through the respiratory chain, using ubiquinone as an electron acceptor. Essential for the catalytic activity and assembly of complex I. The sequence is that of NADH-ubiquinone oxidoreductase chain 6 (MT-ND6) from Osphranter robustus (Wallaroo).